The sequence spans 163 residues: NADH-quinone oxidoreductase subunit I (163 aa).

4Fe-4S ferredoxin-type domains lie at 53–83 (LRRYPNGEERCIACKLCEAICPAQAITIEAG) and 94–123 (VRYDIDMVKCIYCGFCQEACPVEAIVEGPN). [4Fe-4S] cluster is bound by residues C63, C66, C69, C73, C103, C106, C109, and C113.

It belongs to the complex I 23 kDa subunit family. As to quaternary structure, NDH-1 is composed of 14 different subunits. Subunits NuoA, H, J, K, L, M, N constitute the membrane sector of the complex. [4Fe-4S] cluster serves as cofactor.

The protein resides in the cell inner membrane. It carries out the reaction a quinone + NADH + 5 H(+)(in) = a quinol + NAD(+) + 4 H(+)(out). NDH-1 shuttles electrons from NADH, via FMN and iron-sulfur (Fe-S) centers, to quinones in the respiratory chain. The immediate electron acceptor for the enzyme in this species is believed to be ubiquinone. Couples the redox reaction to proton translocation (for every two electrons transferred, four hydrogen ions are translocated across the cytoplasmic membrane), and thus conserves the redox energy in a proton gradient. The chain is NADH-quinone oxidoreductase subunit I from Bartonella henselae (strain ATCC 49882 / DSM 28221 / CCUG 30454 / Houston 1) (Rochalimaea henselae).